The primary structure comprises 780 residues: Cullin-5 (780 aa).

S34 is modified (phosphoserine). Phosphothreonine is present on T210. The 62-residue stretch at 711 to 772 (RILRTQEAII…HRYIRRDEAD (62 aa)) folds into the Cullin neddylation domain. K724 is covalently cross-linked (Glycyl lysine isopeptide (Lys-Gly) (interchain with G-Cter in NEDD8)).

It belongs to the cullin family. Component of multiple cullin-5-RING E3 ubiquitin-protein ligase complexes (ECS complexes, also named CRL5 complexes) formed of CUL5, Elongin BC (ELOB and ELOC), RNF7/RBX2 and a variable SOCS box domain-containing protein as substrate-specific recognition component. CUL5-containing ECS complexes specifically contain RNF7/RBX2, and not RBX1, as catalytic subunit. Component of the ECS(ASB2) complex with the substrate recognition component ASB2. Component of the ECS(ASB6) complex with the substrate recognition component ASB6. Component of the ECS(ASB7) complex with the substrate recognition component ASB7. Component of the ECS(ASB9) complex with the substrate recognition component ASB9. Component of the ECS(ASB11) complex with the substrate recognition component ASB11. Component of the ECS(ASB12) complex with the substrate recognition component ASB12. Component of the ECS(LRRC41) complex with the substrate recognition component LRRC41. Component of the ECS(SOCS1) complex with the substrate recognition component SOCS1. Component of the ECS(SOCS2) complex with the substrate recognition component SOCS2. Component of the ECS(WSB1) complex with the substrate recognition subunit WSB1. Component of the ECS(SOCS3) complex with the substrate recognition component SOCS3. Component of the ECS(SOCS7) complex with the substrate recognition component SOCS7. Component of the ECS(SPSB1) complex with the substrate recognition component SPSB1. Component of the ECS(SPSB3) complex with the substrate recognition component SPSB3. Component of the ECS(SPSB2) complex with the substrate recognition component SPSB2. Component of the ECS(SPSB4) complex with the substrate recognition component SPSB4. Component of the ECS(RAB40) complex with the substrate recognition subunit RAB40A, RAB40B or RAB40C. Component of the ECS(KLHDC1) complex with the substrate recognition component KLHDC1. Component of the ECS(PCMTD1) complex with the substrate recognition subunit PCMTD1. May also form complexes containing RBX1 and ELOA or VHL; additional evidence is however required to confirm this result in vivo. Interacts (when neddylated) with ARIH2; leading to activate the E3 ligase activity of ARIH2. Interacts with ERCC6; the interaction is induced by DNA damaging agents or inhibitors of RNA polymerase II elongation. Interacts with ELOA (via the BC-box). Interacts (unneddylated form) with DCUN1D1, DCUN1D2, DCUN1D3, DCUN1D4 and DCUN1D5; these interactions promote the cullin neddylation. In terms of processing, neddylated; which enhances the ubiquitination activity of ECS complexes and prevents binding of the inhibitor CAND1. Deneddylated via its interaction with the COP9 signalosome (CSN).

The protein localises to the nucleus. The protein operates within protein modification; protein ubiquitination. In terms of biological role, core component of multiple cullin-5-RING E3 ubiquitin-protein ligase complexes (ECS complexes, also named CRL5 complexes), which mediate the ubiquitination and subsequent proteasomal degradation of target proteins. Acts a scaffold protein that contributes to catalysis through positioning of the substrate and the ubiquitin-conjugating enzyme. The functional specificity of the E3 ubiquitin-protein ligase complex depends on the variable SOCS box-containing substrate recognition component. Acts as a key regulator of neuron positioning during cortex development: component of various SOCS-containing ECS complexes, such as the ECS(SOCS7) complex, that regulate reelin signaling by mediating ubiquitination and degradation of DAB1. ECS(SOCS1) seems to direct ubiquitination of JAK2. The ECS(SOCS2) complex mediates the ubiquitination and subsequent proteasomal degradation of phosphorylated EPOR and GHR. The ECS(SPSB3) complex catalyzes ubiquitination of nuclear CGAS. ECS(KLHDC1) complex is part of the DesCEND (destruction via C-end degrons) pathway and mediates ubiquitination and degradation of truncated SELENOS selenoprotein produced by failed UGA/Sec decoding, which ends with a glycine. The ECS(ASB9) complex mediates ubiquitination and degradation of CKB. As part of some ECS complex, promotes 'Lys-11'-linked ubiquitination and degradation of BTRC. As part of a multisubunit ECS complex, polyubiquitinates monoubiquitinated POLR2A. As part of the ECS(RAB40C) complex, mediates ANKRD28 ubiquitination and degradation, thereby regulating protein phosphatase 6 (PP6) complex activity and focal adhesion assembly during cell migration. As part of the ECS(RAB40A) complex, mediates RHOU 'Lys-48'-linked ubiquitination and degradation, thus inhibiting focal adhesion disassembly during cell migration. As part of the ECS(RAB40B) complex, mediates LIMA1/EPLIN and RAP2 ubiquitination, thereby regulating actin cytoskeleton dynamics and stress fiber formation during cell migration. May form a cell surface vasopressin receptor. The chain is Cullin-5 from Mus musculus (Mouse).